A 1267-amino-acid chain; its full sequence is Probable cation-transporting ATPase catp-6 (1267 aa).

Topologically, residues 1–32 are extracellular; the sequence is MVEAGGARRHRMTLESGDHTLTLFAYRTGPFR. The chain crosses the membrane as a helical span at residues 33-53; it reads TILFYALTVLTLGIFRLILHW. The Cytoplasmic portion of the chain corresponds to 54 to 189; that stretch reads KQKWDVKMRM…RNEIVVQLRP (136 aa). A helical transmembrane segment spans residues 190–210; sequence ILYLLVMEVITPFYVFQIFSV. Topologically, residues 211-217 are extracellular; sequence TVWYNDE. A helical membrane pass occupies residues 218 to 238; it reads YAYYASLIVILSLGSIVMDVY. At 239–390 the chain is on the cytoplasmic side; that stretch reads QIRTQEIRLR…DFRFTKDLFK (152 aa). The helical transmembrane segment at 391–411 threads the bilayer; sequence FILFLACISGCGFIYTIIVMI. At 412–424 the chain is on the extracellular side; the sequence is MRGNTLRRIIVRS. The helical transmembrane segment at 425-445 threads the bilayer; sequence LDIITITVPPALPAAMSVGII. At 446 to 950 the chain is on the cytoplasmic side; it reads NAQLRLKKKE…VTSFGIFKYM (505 aa). Asp-476 functions as the 4-aspartylphosphate intermediate in the catalytic mechanism. Mg(2+)-binding residues include Asp-891 and Asp-895. Residues 951–971 form a helical membrane-spanning segment; that stretch reads AGYSLTQFVTVMHLYWISNIL. The Extracellular portion of the chain corresponds to 972–976; it reads TDGQF. A helical transmembrane segment spans residues 977–997; the sequence is MYIDMFLITMFALLFGNTPAF. At 998 to 1013 the chain is on the cytoplasmic side; sequence YRLAHTPPPTRLLSIA. Residues 1014 to 1034 form a helical membrane-spanning segment; sequence SMTSVVGQLIIIGVVQFIVFF. Over 1035–1058 the chain is Extracellular; sequence STSQQPWFTPYQPPVDDEVEDKRS. Residues 1059-1079 form a helical membrane-spanning segment; that stretch reads MQGTALFCVSMFQYIILALVY. Topologically, residues 1080–1097 are cytoplasmic; it reads SKGPPFRGNLWSNKPMCA. The helical transmembrane segment at 1098 to 1118 threads the bilayer; that stretch reads LTIFATLLCLFIVIWPTELVL. Residues 1119 to 1132 lie on the Extracellular side of the membrane; that stretch reads KTLGNVELPSLTFR. A helical transmembrane segment spans residues 1133 to 1153; it reads IFIVIVGAVNAAVSYGFETLF. Topologically, residues 1154-1267 are cytoplasmic; sequence VDFFLLGYWE…EEPEKLERTY (114 aa). The disordered stretch occupies residues 1232 to 1256; sequence ERLISRIGGEPTWLTNPIPPHSLSE.

Belongs to the cation transport ATPase (P-type) (TC 3.A.3) family. Type V subfamily.

It is found in the membrane. The enzyme catalyses ATP + H2O = ADP + phosphate + H(+). The polypeptide is Probable cation-transporting ATPase catp-6 (Caenorhabditis elegans).